The chain runs to 165 residues: 2-C-methyl-D-erythritol 2,4-cyclodiphosphate synthase (165 aa).

A divalent metal cation-binding residues include D9 and H11. 4-CDP-2-C-methyl-D-erythritol 2-phosphate contacts are provided by residues 9–11 (DVH) and 35–36 (HS). H43 serves as a coordination point for a divalent metal cation. 4-CDP-2-C-methyl-D-erythritol 2-phosphate contacts are provided by residues 57–59 (DIG), 101–107 (AQAPKML), 133–136 (TTTE), F140, and R143.

This sequence belongs to the IspF family. As to quaternary structure, homotrimer. A divalent metal cation is required as a cofactor.

It carries out the reaction 4-CDP-2-C-methyl-D-erythritol 2-phosphate = 2-C-methyl-D-erythritol 2,4-cyclic diphosphate + CMP. It participates in isoprenoid biosynthesis; isopentenyl diphosphate biosynthesis via DXP pathway; isopentenyl diphosphate from 1-deoxy-D-xylulose 5-phosphate: step 4/6. Functionally, involved in the biosynthesis of isopentenyl diphosphate (IPP) and dimethylallyl diphosphate (DMAPP), two major building blocks of isoprenoid compounds. Catalyzes the conversion of 4-diphosphocytidyl-2-C-methyl-D-erythritol 2-phosphate (CDP-ME2P) to 2-C-methyl-D-erythritol 2,4-cyclodiphosphate (ME-CPP) with a corresponding release of cytidine 5-monophosphate (CMP). In Pseudoalteromonas translucida (strain TAC 125), this protein is 2-C-methyl-D-erythritol 2,4-cyclodiphosphate synthase.